We begin with the raw amino-acid sequence, 228 residues long: 7-cyano-7-deazaguanine synthase (228 aa).

9 to 19 is an ATP binding site; it reads LSGGPDSTTVL. Positions 193, 203, 206, and 209 each coordinate Zn(2+).

This sequence belongs to the QueC family. It depends on Zn(2+) as a cofactor.

The catalysed reaction is 7-carboxy-7-deazaguanine + NH4(+) + ATP = 7-cyano-7-deazaguanine + ADP + phosphate + H2O + H(+). The protein operates within purine metabolism; 7-cyano-7-deazaguanine biosynthesis. Functionally, catalyzes the ATP-dependent conversion of 7-carboxy-7-deazaguanine (CDG) to 7-cyano-7-deazaguanine (preQ(0)). The sequence is that of 7-cyano-7-deazaguanine synthase from Rickettsia africae (strain ESF-5).